The primary structure comprises 182 residues: UPF0316 protein BCAH820_3389 (182 aa).

3 helical membrane-spanning segments follow: residues 6-26, 32-52, and 58-78; these read LIFV…ILLV, SAAA…GIVF, and WMNI…GGYI.

Belongs to the UPF0316 family.

It localises to the cell membrane. This is UPF0316 protein BCAH820_3389 from Bacillus cereus (strain AH820).